Consider the following 447-residue polypeptide: Sulfoquinovose isomerase (447 aa).

Belongs to the SqvD family.

It carries out the reaction 6-sulfo-beta-D-quinovose = 6-deoxy-6-sulfo-D-fructose. Its function is as follows. Part of the sulfo-TK pathway, a D-sulfoquinovose degradation pathway that produces 2-hydroxyethane-1-sulfonate (isethionate). Catalyzes the isomerization of sulfoquinovose (SQ) to 6-deoxy-6-sulfo-D-fructose (SF). The protein is Sulfoquinovose isomerase of Clostridium sp. (strain MSTE9).